A 304-amino-acid polypeptide reads, in one-letter code: MIRQRTLKNVIRATGVGLHTGEKVYMTVRPAPVDTGIVFRRVDLDPVVEIKAAADAVGETTLSSTLVQDGVKVGTVEHFLSAMAGLGIDNAFVELSAPEMPIMDGSAGPFVFLLQSAGIKEQEAAKKFIRIKKEVTVREDDKTATFVPFDGFKVTFSIEFDHPVFEERNQLASIDFSTTSFVKEVARARTFGFMRDIEFLRSQNLALGGSVDNAIVVDEYRILNEDGLRYDDEFVKHKMLDAIGDLYLLGHSLIGEFIGHKSGHALNNALLREILRQEDSYEVVTFEDATDAPVSYMRPVLAAE.

Zn(2+) is bound by residues histidine 78, histidine 237, and aspartate 241. The active-site Proton donor is histidine 264.

This sequence belongs to the LpxC family. It depends on Zn(2+) as a cofactor.

It carries out the reaction a UDP-3-O-[(3R)-3-hydroxyacyl]-N-acetyl-alpha-D-glucosamine + H2O = a UDP-3-O-[(3R)-3-hydroxyacyl]-alpha-D-glucosamine + acetate. It functions in the pathway glycolipid biosynthesis; lipid IV(A) biosynthesis; lipid IV(A) from (3R)-3-hydroxytetradecanoyl-[acyl-carrier-protein] and UDP-N-acetyl-alpha-D-glucosamine: step 2/6. Its function is as follows. Catalyzes the hydrolysis of UDP-3-O-myristoyl-N-acetylglucosamine to form UDP-3-O-myristoylglucosamine and acetate, the committed step in lipid A biosynthesis. The sequence is that of UDP-3-O-acyl-N-acetylglucosamine deacetylase from Alcanivorax borkumensis (strain ATCC 700651 / DSM 11573 / NCIMB 13689 / SK2).